The sequence spans 106 residues: Putative cytochrome c oxidase subunit 7A3, mitochondrial (106 aa).

The N-terminal 23 residues, 1-23, are a transit peptide targeting the mitochondrion; the sequence is MLWNLLALHQIGQRTISTASHRH.

It belongs to the cytochrome c oxidase VIIa family.

The protein resides in the mitochondrion inner membrane. This Homo sapiens (Human) protein is Putative cytochrome c oxidase subunit 7A3, mitochondrial (COX7A2P2).